Reading from the N-terminus, the 307-residue chain is uncharacterized protein (307 aa).

8 helical membrane-spanning segments follow: residues 1-21 (MLIL…MNML), 52-72 (IVFT…IGFV), 99-119 (FIAI…LLFF), 133-153 (FLGL…AGPL), 174-194 (LLIG…IGIL), 208-228 (AMSV…MAAV), 242-262 (VVFN…ATGF), and 277-297 (FSLL…NLFY).

It localises to the cell membrane. This is an uncharacterized protein from Bacillus subtilis (strain 168).